A 181-amino-acid chain; its full sequence is uncharacterized protein (181 aa).

The segment at 126–148 (SYKDKEEEEDEDPEEDDDDPRVQ) is disordered. A compositionally biased stretch (acidic residues) spans 131–144 (EEEEDEDPEEDDDD).

It belongs to the chlamydial CPn_0422/CT_273/TC_0545 family.

This is an uncharacterized protein from Chlamydia pneumoniae (Chlamydophila pneumoniae).